The sequence spans 238 residues: Protein A47 (238 aa).

The protein belongs to the orthopoxvirus A47 protein family.

The chain is Protein A47 from Vaccinia virus (strain Ankara) (VACV).